Consider the following 181-residue polypeptide: Oligoribonuclease (181 aa).

In terms of domain architecture, Exonuclease spans 8 to 171 (LIWLDLEMTG…DDIKDSIMEL (164 aa)). Residue Tyr129 is part of the active site.

This sequence belongs to the oligoribonuclease family.

Its subcellular location is the cytoplasm. Functionally, 3'-to-5' exoribonuclease specific for small oligoribonucleotides. This is Oligoribonuclease from Pseudoalteromonas translucida (strain TAC 125).